Consider the following 198-residue polypeptide: NAD(P)H dehydrogenase (quinone) (198 aa).

Residues Val4 to Val189 enclose the Flavodoxin-like domain. Residues Ser10–Ile15 and Thr78–Phe80 each bind FMN. Position 12 (Tyr12) interacts with NAD(+). Trp98 contacts substrate. FMN-binding positions include Ser113 to Gly118 and His133.

It belongs to the WrbA family. It depends on FMN as a cofactor.

The enzyme catalyses a quinone + NADH + H(+) = a quinol + NAD(+). It catalyses the reaction a quinone + NADPH + H(+) = a quinol + NADP(+). This Escherichia coli (strain SE11) protein is NAD(P)H dehydrogenase (quinone).